Consider the following 301-residue polypeptide: GTPase Era (301 aa).

The region spanning 7–175 is the Era-type G domain; the sequence is YCGFIAIVGR…AAIVRKHLPE (169 aa). The G1 stretch occupies residues 15–22; sequence GRPNVGKS. Residue 15 to 22 coordinates GTP; the sequence is GRPNVGKS. The G2 stretch occupies residues 41-45; it reads QTTRH. A G3 region spans residues 62–65; the sequence is DTPG. GTP-binding positions include 62–66 and 124–127; these read DTPGL and NKVD. The G4 stretch occupies residues 124-127; that stretch reads NKVD. The tract at residues 154 to 156 is G5; it reads ISA. Residues 206–283 form the KH type-2 domain; that stretch reads LGAELPYSVT…HLELWVKVKS (78 aa).

The protein belongs to the TRAFAC class TrmE-Era-EngA-EngB-Septin-like GTPase superfamily. Era GTPase family. As to quaternary structure, monomer.

The protein resides in the cytoplasm. Its subcellular location is the cell inner membrane. In terms of biological role, an essential GTPase that binds both GDP and GTP, with rapid nucleotide exchange. Plays a role in 16S rRNA processing and 30S ribosomal subunit biogenesis and possibly also in cell cycle regulation and energy metabolism. The protein is GTPase Era of Escherichia coli O1:K1 / APEC.